The following is a 447-amino-acid chain: Phosphatidylinositol 4-kinase type 2-alpha (447 aa).

Residues 1 to 77 (MDETSPLVSP…HRNEFPEDPE (77 aa)) form a disordered region. Over residues 48 to 77 (RSRERQPLLDRDRGASPRDPHRNEFPEDPE) the composition is skewed to basic and acidic residues. Residues 92 to 421 (GIYPERIYQG…VQMPPVIVET (330 aa)) enclose the PI3K/PI4K catalytic domain. The tract at residues 98–104 (IYQGSSG) is G-loop. Residues 99–105 (YQGSSGS) and Lys120 contribute to the ATP site. Positions 125–127 (EPY) are important for substrate binding. The interval 133 to 146 (KWTKWLQKLCCPCC) is important for interaction with membranes. S-palmitoyl cysteine attachment occurs at residues Cys142, Cys143, Cys145, and Cys146. 229-232 (QIFV) serves as a coordination point for ATP. The interval 236 to 244 (KDADFWLRR) is important for interaction with membranes. Residues 273–281 (RNTDRGNDN) are catalytic loop. The tract at residues 312–332 (AIDNGLAFPLKHPDSWRAYPF) is activation loop. ATP is bound at residue Asp314. The tract at residues 327–336 (WRAYPFYWAW) is important for interaction with membranes.

It belongs to the PI3/PI4-kinase family. Type II PI4K subfamily.

Its subcellular location is the golgi apparatus. It is found in the trans-Golgi network membrane. It localises to the membrane raft. The protein resides in the endosome. The protein localises to the cytoplasmic vesicle. Its subcellular location is the cell projection. It is found in the dendrite. It localises to the presynaptic cell membrane. The protein resides in the synapse. The protein localises to the synaptosome. Its subcellular location is the mitochondrion. It is found in the membrane. It localises to the cell membrane. The protein resides in the perikaryon. The protein localises to the neuron projection. The enzyme catalyses a 1,2-diacyl-sn-glycero-3-phospho-(1D-myo-inositol) + ATP = a 1,2-diacyl-sn-glycero-3-phospho-(1D-myo-inositol 4-phosphate) + ADP + H(+). Its function is as follows. Membrane-bound phosphatidylinositol-4 kinase (PI4-kinase) that catalyzes the phosphorylation of phosphatidylinositol (PI) to phosphatidylinositol 4-phosphate (PI4P), a lipid that plays important roles in endocytosis, Golgi function, protein sorting and membrane trafficking. Besides, phosphorylation of phosphatidylinositol (PI) to phosphatidylinositol 4-phosphate (PI4P) is the first committed step in the generation of phosphatidylinositol 4,5-bisphosphate (PIP2), a precursor of the second messenger inositol 1,4,5-trisphosphate (InsP3). The sequence is that of Phosphatidylinositol 4-kinase type 2-alpha (pi4k2a) from Danio rerio (Zebrafish).